Reading from the N-terminus, the 217-residue chain is 3-dehydroquinate dehydratase (217 aa).

Residues 26–28 (EFR) and arginine 59 contribute to the 3-dehydroquinate site. Histidine 114 functions as the Proton donor/acceptor in the catalytic mechanism. Residue lysine 140 is the Schiff-base intermediate with substrate of the active site. The 3-dehydroquinate site is built by arginine 178 and glutamine 201.

It belongs to the type-I 3-dehydroquinase family. As to quaternary structure, homodimer.

The enzyme catalyses 3-dehydroquinate = 3-dehydroshikimate + H2O. It functions in the pathway metabolic intermediate biosynthesis; chorismate biosynthesis; chorismate from D-erythrose 4-phosphate and phosphoenolpyruvate: step 3/7. Involved in the third step of the chorismate pathway, which leads to the biosynthesis of aromatic amino acids. Catalyzes the cis-dehydration of 3-dehydroquinate (DHQ) and introduces the first double bond of the aromatic ring to yield 3-dehydroshikimate. The sequence is that of 3-dehydroquinate dehydratase from Hydrogenobaculum sp. (strain Y04AAS1).